The sequence spans 342 residues: Alanine racemase (342 aa).

Residue Lys33 is the Proton acceptor; specific for D-alanine of the active site. At Lys33 the chain carries N6-(pyridoxal phosphate)lysine. Position 128 (Arg128) interacts with substrate. Tyr240 serves as the catalytic Proton acceptor; specific for L-alanine. Residue Met288 coordinates substrate.

This sequence belongs to the alanine racemase family. The cofactor is pyridoxal 5'-phosphate.

The enzyme catalyses L-alanine = D-alanine. The protein operates within amino-acid biosynthesis; D-alanine biosynthesis; D-alanine from L-alanine: step 1/1. In terms of biological role, catalyzes the interconversion of L-alanine and D-alanine. May also act on other amino acids. The chain is Alanine racemase (alr) from Jannaschia sp. (strain CCS1).